Consider the following 276-residue polypeptide: Kallikrein-11 (276 aa).

A signal peptide spans 1-44; it reads MRRLKSDWKLSTETREPGARPALLQARMILRLIALALVTGHVGG. Residues 45 to 47 constitute a propeptide, activation peptide; that stretch reads ETR. One can recognise a Peptidase S1 domain in the interval 48–274; the sequence is IIKGYECRPH…YFNWIHEVMR (227 aa). Intrachain disulfides connect Cys54–Cys189, Cys73–Cys89, Cys168–Cys235, Cys200–Cys214, and Cys225–Cys250. Catalysis depends on His88, which acts as the Charge relay system. An N-linked (GlcNAc...) asparagine glycan is attached at Asn125. Residue Asp136 is the Charge relay system of the active site. N-linked (GlcNAc...) asparagine glycans are attached at residues Asn191 and Asn207. The Charge relay system role is filled by Ser229. Asn236 carries an N-linked (GlcNAc...) asparagine glycan.

Belongs to the peptidase S1 family. Kallikrein subfamily. As to expression, expressed in brain and prostate (isoform 1) and prostate (isoform 2).

It localises to the secreted. Its function is as follows. Possible multifunctional protease. Efficiently cleaves 'bz-Phe-Arg-4-methylcoumaryl-7-amide', a kallikrein substrate, and weakly cleaves other substrates for kallikrein and trypsin. This is Kallikrein-11 (Klk11) from Mus musculus (Mouse).